Here is a 96-residue protein sequence, read N- to C-terminus: Protein Vpr (96 aa).

Residues 1–42 (MEQAPEDQGPQREPYNEWALELLEELKNEAVRHFPRLWLHGL) are homooligomerization. Ser-79 and Ser-96 each carry phosphoserine; by host.

Belongs to the HIV-1 VPR protein family. Homooligomer, may form homodimer. Interacts with p6-gag region of the Pr55 Gag precursor protein through a (Leu-X-X)4 motif near the C-terminus of the P6gag protein. Interacts with host UNG. May interact with host RAD23A/HHR23A. Interacts with host VPRBP/DCAF1, leading to hijack the CUL4A-RBX1-DDB1-DCAF1/VPRBP complex, mediating ubiquitination of host proteins such as TERT and ZGPAT and arrest of the cell cycle in G2 phase. In terms of processing, phosphorylated on several residues by host. These phosphorylations regulate VPR activity for the nuclear import of the HIV-1 pre-integration complex.

The protein resides in the virion. The protein localises to the host nucleus. Its subcellular location is the host extracellular space. Functionally, during virus replication, may deplete host UNG protein, and incude G2-M cell cycle arrest. Acts by targeting specific host proteins for degradation by the 26S proteasome, through association with the cellular CUL4A-DDB1 E3 ligase complex by direct interaction with host VPRPB/DCAF-1. Cell cycle arrest reportedly occurs within hours of infection and is not blocked by antiviral agents, suggesting that it is initiated by the VPR carried into the virion. Additionally, VPR induces apoptosis in a cell cycle dependent manner suggesting that these two effects are mechanistically linked. Detected in the serum and cerebrospinal fluid of AIDS patient, VPR may also induce cell death to bystander cells. During virus entry, plays a role in the transport of the viral pre-integration (PIC) complex to the host nucleus. This function is crucial for viral infection of non-dividing macrophages. May act directly at the nuclear pore complex, by binding nucleoporins phenylalanine-glycine (FG)-repeat regions. In Human immunodeficiency virus type 1 group M subtype G (isolate SE6165) (HIV-1), this protein is Protein Vpr.